Here is a 431-residue protein sequence, read N- to C-terminus: MIEKGAEISGKRRGRNNAANSKSLGTNVNGSNSWEEGSSSSSSDDEPGGGGMRVGLQYQAVVPEFDQEVAKNCQERENLGMLVWSPNQNISEAKLDEYISVAKEKHGYNMEQALGMLFWHKHNIEKSLADLLNFTPFPDEWTVEDRVLFEQAFSFHGKTFHRIQQMLPDKSIASLVKFYYSWKKTRSKTSVMDRHARKQKREREGSGDEIEETNGANPVDIEIEQPKEAKKEVPKNDTVPHIKKEKHPSQAKNRAKRKPPNGMFLSQEDVEAVSANANAATTVLRQLDMELVSIKRQIQNIKQTNSAFKEKLQGGIEDYRIQEVSQKFNARWTTEEQLLAVQAIRMYGRDFQAISDVIGNKSVVQVKNFFVNYRRRFNIDQVLQEWEAEHGKTEENGDCTEKAVKLPETAIKMSDEEEEASLLDITYPSAS.

The span at 1–10 (MIEKGAEISG) shows a compositional bias: basic and acidic residues. A disordered region spans residues 1–53 (MIEKGAEISGKRRGRNNAANSKSLGTNVNGSNSWEEGSSSSSSDDEPGGGGMR). Residues 17-28 (NAANSKSLGTNV) are compositionally biased toward polar residues. A compositionally biased stretch (low complexity) spans 29 to 42 (NGSNSWEEGSSSSS). The region spanning 50–135 (GGMRVGLQYQ…KSLADLLNFT (86 aa)) is the ELM2 domain. The region spanning 136–187 (PFPDEWTVEDRVLFEQAFSFHGKTFHRIQQMLPDKSIASLVKFYYSWKKTRS) is the SANT 1 domain. The tract at residues 190 to 262 (SVMDRHARKQ…NRAKRKPPNG (73 aa)) is disordered. The span at 224–242 (EQPKEAKKEVPKNDTVPHI) shows a compositional bias: basic and acidic residues. A coiled-coil region spans residues 267–314 (QEDVEAVSANANAATTVLRQLDMELVSIKRQIQNIKQTNSAFKEKLQG). The 52-residue stretch at 327 to 378 (KFNARWTTEEQLLAVQAIRMYGRDFQAISDVIGNKSVVQVKNFFVNYRRRFN) folds into the SANT 2 domain.

The protein belongs to the CoREST family. As to quaternary structure, component of a BHC histone deacetylase complex that contains KDM1A. Expressed in territories in which neurogenesis takes place.

The protein resides in the nucleus. Essential component of the BHC complex, a corepressor complex that represses transcription of neuron-specific genes in non-neuronal cells. The BHC complex is recruited at RE1/NRSE sites by REST and acts by deacetylating and demethylating specific sites on histones, thereby acting as a chromatin modifier. In the BHC complex, it serves as a molecular beacon for the recruitment of molecular machinery that imposes silencing across a chromosomal interval. Plays a central role in demethylation of Lys-4 of histone H3 by promoting demethylase activity of KDM1A on core histones and nucleosomal substrates. This chain is REST corepressor 1 (rcor1), found in Xenopus laevis (African clawed frog).